Consider the following 89-residue polypeptide: Small ribosomal subunit protein uS17 (89 aa).

This sequence belongs to the universal ribosomal protein uS17 family. In terms of assembly, part of the 30S ribosomal subunit.

Functionally, one of the primary rRNA binding proteins, it binds specifically to the 5'-end of 16S ribosomal RNA. The chain is Small ribosomal subunit protein uS17 from Polaromonas sp. (strain JS666 / ATCC BAA-500).